The chain runs to 1031 residues: Protein draper (1031 aa).

A signal peptide spans 1–16 (MLPVILIACLAQLVLA). Residues 17–800 (QADLKDLDGP…DQSENSSRAS (784 aa)) are Extracellular-facing. The EMI domain occupies 25–100 (GPNICKRREL…YIASAGECVP (76 aa)). Intrachain disulfides connect Cys29/Cys88, Cys55/Cys62, Cys87/Cys98, Cys102/Cys111, Cys106/Cys117, and Cys119/Cys128. Asn73 carries an N-linked (GlcNAc...) asparagine glycan. 6 EGF-like domains span residues 99–129 (VPHCSEPCQHGRCISPEKCKCDHGYGGPACD), 137–172 (YGRNCSMQCDCLNNAVCEPFSGDCECAKGYTGARCA), 180–215 (FGANCSEKCRCENGGKCHHVSGECQCAPGFTGPLCD), 223–258 (HGAQCQQDCPCQNDGKCQPETGACMCNPGWTGDVCA), 266–301 (YGPGCQESCECYKGAPCHHITGQCECPPGYRGERCF), and 309–344 (YGFNCSMTCDCANDAMCDRANGTCICNPGWTGAKCA). N-linked (GlcNAc...) asparagine glycosylation occurs at Asn140. Disulfide bonds link Cys141–Cys153, Cys147–Cys160, and Cys162–Cys171. N-linked (GlcNAc...) asparagine glycosylation is present at Asn183. 9 cysteine pairs are disulfide-bonded: Cys184/Cys196, Cys190/Cys203, Cys205/Cys214, Cys227/Cys239, Cys233/Cys246, Cys248/Cys257, Cys270/Cys282, Cys276/Cys289, and Cys291/Cys300. Asn312 carries N-linked (GlcNAc...) asparagine glycosylation. Disulfide bonds link Cys313-Cys325, Cys319-Cys332, and Cys334-Cys343. Asn329 carries an N-linked (GlcNAc...) asparagine glycan. Asn358 carries N-linked (GlcNAc...) asparagine glycosylation. 2 EGF-like domains span residues 398 to 433 (YGPNCELTCNCKNGAKCSPVNGTCLCAPGWRGPTCE) and 484 to 519 (FGQDCAKVCDCHNNAACNPQNGSCTCAAGWTGERCE). 6 cysteine pairs are disulfide-bonded: Cys402–Cys414, Cys408–Cys421, Cys423–Cys432, Cys488–Cys500, Cys494–Cys507, and Cys509–Cys518. A glycan (N-linked (GlcNAc...) asparagine) is linked at Asn418. Asn504 carries N-linked (GlcNAc...) asparagine glycosylation. N-linked (GlcNAc...) asparagine glycosylation is found at Asn540, Asn584, and Asn585. Positions 572-607 (YGENCDKVCRCLNNSSCDPDSGNCICSAGWTGADCA) constitute an EGF-like 9 domain. 3 disulfide bridges follow: Cys576-Cys588, Cys582-Cys595, and Cys597-Cys606. Residue Asn630 is glycosylated (N-linked (GlcNAc...) asparagine). One can recognise an EGF-like 10 domain in the interval 660–695 (YGPGCKLKCNCEHGGECNHVTGQCQCLPGWTGSNCN). Disulfide bonds link Cys664–Cys676, Cys670–Cys683, and Cys685–Cys694. N-linked (GlcNAc...) asparagine glycans are attached at residues Asn695 and Asn795. Residues 801-821 (VALTLVLMTLFACIIFAVFIY) traverse the membrane as a helical segment. Over 822 to 1031 (YRRRVSNLKT…SPSSSPKFLK (210 aa)) the chain is Cytoplasmic. A compositionally biased stretch (basic and acidic residues) spans 940-954 (KEGYKDPDEYDHLDY). Disordered regions lie at residues 940–964 (KEGYKDPDEYDHLDYSRPSTSQKPH) and 989–1031 (TVLL…KFLK). The span at 1009 to 1031 (DNTNTNLDNVSTASPSSSPKFLK) shows a compositional bias: polar residues.

It belongs to the MEGF family. As to quaternary structure, interacts (via the cytoplasmic domain) with shark; this is required for the recruitment of drpr and glial cells to severed axons and for the phagocytosis of axonal debris by glial cells following axon injury. Interacts with ced-6. Interacts with csw; this results in dephosphorylation of drpr isoform A which is required for the inhibition of glial cell engulfment of axonal debris produced following axonal injury. In terms of processing, phosphorylated on tyrosine residues. Phosphorylation is induced by binding to prtp. It is also induced by binding to the membrane phospholipid phosphatidylserine. Phosphorylation may be mediated directly or indirectly by Src42a and is required for interaction with shark. Dephosphorylated by csw which is required for the inhibition of glial cell engulfment of axonal debris produced following axonal injury. Expressed in adult head (at protein level). Expressed in glia, macrophages and ectoderm (at protein level). Detected in glia around the mushroom body dorsal lobe and in glial processes infiltrating the medial lobe (at protein level). Expressed in adult brain glia including antennal lobe glia (at protein level). Expressed in the larval fat body (at protein level). Expressed in the ovary (at protein level). Isoform B: Predominant isoform in adult glia.

It is found in the cell membrane. Its subcellular location is the cell projection. It localises to the axon. The protein resides in the cytoplasm. The protein localises to the postsynaptic cell membrane. It is found in the cell cortex. Its subcellular location is the phagocytic cup. It localises to the cytoplasmic vesicle. The protein resides in the phagosome. Receptor which is involved in the phagocytosis of a variety of cells including apoptotic cells, severed and pruned axons, degenerating dendrites, salivary gland cells, germline cells and bacteria. Binds to the ligand prtp which relocates from the endoplasmic reticulum to the cell surface during apoptosis. Ligand-binding may promote tyrosine phosphorylation mediated by Src42a, interaction with shark and subsequent activation of phagocytosis. Also binds to the membrane phospholipid phosphatidylserine which is exposed on the surface of apoptotic cells. Required for the phagocytosis of apoptotic cells by macrophages. Also required for the phagocytosis of apoptotic neurons by glial cells in the embryonic nervous system. Acts downstream of NimC4/simu in the glial phagocytosis of apoptotic neurons. Plays a role in the glial engulfment of larval axons as part of programmed axon pruning during metamorphosis. Also mediates glial cell clearance of severed axons following axonal injury. Required for the engulfment of degenerating dendrites by epidermal cells. Required in the ovary for the engulfment and subsequent processing of dying germline cells by follicular epithelial cells through activation of the JNK/bsk pathway. Plays a role in neuromuscular junction development by mediating the clearance of presynaptic debris and immature boutons which are shed by growing synapses. Required for larval salivary gland cell death which occurs following a rise in steroid levels after puparium formation. Also involved in bacterial phagocytosis. Required for hemocyte phagocytosis of the Gram-positive bacterium S.aureus. Lipoteichoic acid, synthesized by the S.aureus lipoteichoic acid synthase ltaS, acts as a ligand for drpr in this process. Together with Src42a and shark, promotes the migration of macrophages to sites of wounding as part of a signaling cascade where Scr42a detects production of hydrogen peroxide at wound sites which triggers phosphorylation of drpr and subsequent recruitment and activation of shark. Also required for macrophage priming which occurs following phagocytosis of apoptotic cells and ensures that macrophages develop a form of molecular memory that allows them to later mount an inflammatory response to tissue damage and bacterial infection. Is also an essential factor in the regulation of muscle development and myogenesis, and as a consequence is required for normal locomotion. Likely to control the balance between skeletal muscle satellite cells proliferation and differentiation through regulation of the notch signaling pathway. Its function is as follows. Promotes engulfment of axonal debris by glial cells following axonal injury. In terms of biological role, potently inhibits glial cell engulfment of axonal debris produced following axonal injury. The chain is Protein draper from Drosophila melanogaster (Fruit fly).